The primary structure comprises 364 residues: Aminomethyltransferase (364 aa).

It belongs to the GcvT family. The glycine cleavage system is composed of four proteins: P, T, L and H.

It carries out the reaction N(6)-[(R)-S(8)-aminomethyldihydrolipoyl]-L-lysyl-[protein] + (6S)-5,6,7,8-tetrahydrofolate = N(6)-[(R)-dihydrolipoyl]-L-lysyl-[protein] + (6R)-5,10-methylene-5,6,7,8-tetrahydrofolate + NH4(+). The glycine cleavage system catalyzes the degradation of glycine. This chain is Aminomethyltransferase, found in Salmonella enteritidis PT4 (strain P125109).